A 181-amino-acid polypeptide reads, in one-letter code: Translation initiation factor IF-3 (181 aa).

Belongs to the IF-3 family. As to quaternary structure, monomer.

It is found in the cytoplasm. IF-3 binds to the 30S ribosomal subunit and shifts the equilibrium between 70S ribosomes and their 50S and 30S subunits in favor of the free subunits, thus enhancing the availability of 30S subunits on which protein synthesis initiation begins. The chain is Translation initiation factor IF-3 from Mycoplasma capricolum subsp. capricolum (strain California kid / ATCC 27343 / NCTC 10154).